The following is a 439-amino-acid chain: Ribosomal protein uS12 methylthiotransferase RimO (439 aa).

The MTTase N-terminal domain maps to 7–119 (KQLCLISLGC…IDIMIAKKQN (113 aa)). [4Fe-4S] cluster is bound by residues Cys-16, Cys-50, Cys-82, Cys-151, Cys-155, and Cys-158. Positions 137–368 (TGSSVHAYVK…ALKHQNHSFK (232 aa)) constitute a Radical SAM core domain.

The protein belongs to the methylthiotransferase family. RimO subfamily. The cofactor is [4Fe-4S] cluster.

It localises to the cytoplasm. The enzyme catalyses L-aspartate(89)-[ribosomal protein uS12]-hydrogen + (sulfur carrier)-SH + AH2 + 2 S-adenosyl-L-methionine = 3-methylsulfanyl-L-aspartate(89)-[ribosomal protein uS12]-hydrogen + (sulfur carrier)-H + 5'-deoxyadenosine + L-methionine + A + S-adenosyl-L-homocysteine + 2 H(+). In terms of biological role, catalyzes the methylthiolation of an aspartic acid residue of ribosomal protein uS12. In Helicobacter pylori (strain P12), this protein is Ribosomal protein uS12 methylthiotransferase RimO.